The chain runs to 423 residues: uncharacterized protein (423 aa).

This is an uncharacterized protein from Ictaluridae (bullhead catfishes).